A 2155-amino-acid chain; its full sequence is Alpha-tectorin (2155 aa).

Positions Met-1 to Ala-22 are cleaved as a signal peptide. 8 N-linked (GlcNAc...) asparagine glycosylation sites follow: Asn-34, Asn-187, Asn-215, Asn-278, Asn-455, Asn-506, Asn-528, and Asn-560. An NIDO domain is found at Pro-98–Lys-252. Residues Cys-260 to Cys-314 enclose the VWFC domain. One can recognise a VWFD 1 domain in the interval Ser-320–Asp-500. 2 disulfides stabilise this stretch: Cys-322/Cys-461 and Cys-344/Cys-499. A TIL 1 domain is found at Cys-597–Cys-650. 9 N-linked (GlcNAc...) asparagine glycosylation sites follow: Asn-670, Asn-687, Asn-813, Asn-843, Asn-855, Asn-898, Asn-920, Asn-931, and Asn-949. Residues Thr-711–Asn-886 enclose the VWFD 2 domain. Residues Cys-713 and Cys-849 are joined by a disulfide bond. Residues Cys-984–Cys-1036 form the TIL 2 domain. N-linked (GlcNAc...) asparagine glycosylation is found at Asn-1048, Asn-1235, and Asn-1364. The VWFD 3 domain maps to Ala-1098–Gln-1278. Disulfide bonds link Cys-1100-Cys-1241 and Cys-1122-Cys-1277. A TIL 3 domain is found at Cys-1372–Cys-1425. The VWFD 4 domain occupies Ser-1485–Asn-1666. 7 disulfides stabilise this stretch: Cys-1487–Cys-1622, Cys-1509–Cys-1665, Cys-1717–Cys-1775, Cys-1741–Cys-1784, Cys-1786–Cys-1818, Cys-1806–Cys-1898, and Cys-1837–Cys-1857. Residues Asn-1538, Asn-1565, Asn-1756, Asn-1772, Asn-1794, Asn-1851, Asn-1864, Asn-1880, Asn-1920, and Asn-1939 are each glycosylated (N-linked (GlcNAc...) asparagine). Residues Thr-1805–Asn-2059 form the ZP domain. Cystine bridges form between Cys-1980–Cys-2040, Cys-2001–Cys-2056, and Cys-2045–Cys-2052. Asn-2091 carries GPI-anchor amidated asparagine lipidation. Residues Gly-2092–Ser-2155 constitute a propeptide, removed in mature form.

As to quaternary structure, may form homomeric filament after self-association or heteromeric filament after association with beta-tectorin. Interacts with CEACAM16. In terms of processing, the presence of a hydrophobic C-terminus preceded by a potential cleavage site strongly suggests that tectorins are synthesized as glycosylphosphatidylinositol-linked, membrane-bound precursors. Tectorins are targeted to the apical surface of the inner ear epithelia by the lipid and proteolytically released into the extracellular compartment.

The protein resides in the cell membrane. The protein localises to the secreted. Its subcellular location is the extracellular space. It localises to the extracellular matrix. One of the major non-collagenous components of the tectorial membrane. The tectorial membrane is an extracellular matrix of the inner ear that covers the neuroepithelium of the cochlea and contacts the stereocilia bundles of specialized sensory hair cells. Sound induces movement of these hair cells relative to the tectorial membrane, deflects the stereocilia and leads to fluctuations in hair-cell membrane potential, transducing sound into electrical signals. The sequence is that of Alpha-tectorin (TECTA) from Homo sapiens (Human).